A 423-amino-acid chain; its full sequence is CinA-like protein (423 aa).

Belongs to the CinA family.

This Chlorobaculum tepidum (strain ATCC 49652 / DSM 12025 / NBRC 103806 / TLS) (Chlorobium tepidum) protein is CinA-like protein.